A 596-amino-acid chain; its full sequence is MNILSRKENVASYFDIRVAAEHDLIVIQGLADSAEPTPLSGSVVLCLNEAISVKAISLKLVGKCRISWSEPSPTVRGGQRHNKQEYVVYEKNWIFVPYTGANRTLRAGNYEYPFHVMLPGDIAESVEGLQSCYVVYRLKASIDRTGLASKMVKKKHIRLIRALPADAIEYTQTISVDNTWPNKIEYTISVPTKAYAIGSYIPIHFVLVPLLKRLTIGKISITLKEYITLHVAHGYNGLPASKDEVRTVRSLQTEELEEFSDHYELTKNLELPSSLVECLQDCDLDGIKIRHKLKFSVSLRNPDGHISELRAALPVVLMIPPQLFGDRAEVESLRENFESFNQPLPSYQNSMYDRLYDGLSYSNLDTPLPSGATTPRRRDSMEPTYASNEAHRRQLIAGLTELALQQQPQGRSPNEHSPSNHPEDFPPSFSLGSNPSSGAASAVITRNPSETSLADLSRVPSYKEATRSAVPLESPLQSTLPSYEDVARIEHLSRPPSPGIVTPPQRTSPSFFVSPTESTRQSLDSRRSFEHSTSSSSGISPSHSSASLAHLSQASNPNGSSSAPHRPTSARVGSHRNALDALRRARMLPSGFSRRN.

Residues 194-211 (AYAIGSYIPIHFVLVPLL) form a helical membrane-spanning segment. 2 disordered regions span residues 363-387 (NLDT…TYAS) and 405-446 (QQQP…VITR). A phosphothreonine mark is found at Thr-373 and Thr-374. Composition is skewed to polar residues over residues 405-420 (QQQP…SPSN) and 430-446 (SLGS…VITR). Phosphoserine is present on residues Ser-452, Ser-474, Ser-493, and Ser-497. The segment at 493-596 (SRPPSPGIVT…MLPSGFSRRN (104 aa)) is disordered. Thr-502 and Thr-507 each carry phosphothreonine. The segment covering 504–522 (PQRTSPSFFVSPTESTRQS) has biased composition (polar residues). Residue Ser-514 is modified to Phosphoserine. A compositionally biased stretch (low complexity) spans 531-555 (HSTSSSSGISPSHSSASLAHLSQAS).

The protein belongs to the arrestin family.

The protein localises to the membrane. The chain is Arrestin domain-containing protein C31A2.12 from Schizosaccharomyces pombe (strain 972 / ATCC 24843) (Fission yeast).